The chain runs to 442 residues: uncharacterized protein (442 aa).

This is an uncharacterized protein from Sputnik virophage.